Consider the following 544-residue polypeptide: Chaperonin GroEL (544 aa).

Residues 30–33 (TLGP), K51, 87–91 (DGTTT), G415, 479–481 (NAA), and D495 each bind ATP.

This sequence belongs to the chaperonin (HSP60) family. Forms a cylinder of 14 subunits composed of two heptameric rings stacked back-to-back. Interacts with the co-chaperonin GroES.

Its subcellular location is the cytoplasm. The enzyme catalyses ATP + H2O + a folded polypeptide = ADP + phosphate + an unfolded polypeptide.. Together with its co-chaperonin GroES, plays an essential role in assisting protein folding. The GroEL-GroES system forms a nano-cage that allows encapsulation of the non-native substrate proteins and provides a physical environment optimized to promote and accelerate protein folding. In Acinetobacter baylyi (strain ATCC 33305 / BD413 / ADP1), this protein is Chaperonin GroEL.